A 723-amino-acid polypeptide reads, in one-letter code: Catalase-peroxidase (723 aa).

A cross-link (tryptophyl-tyrosyl-methioninium (Trp-Tyr) (with M-238)) is located at residues 89–212; that stretch reads WHSAGTYRTG…LAAVQMGLIY (124 aa). Histidine 90 functions as the Proton acceptor in the catalytic mechanism. A cross-link (tryptophyl-tyrosyl-methioninium (Tyr-Met) (with W-89)) is located at residues 212–238; it reads YVNPEGPNGDPDPFAAAVDIRETFARM. Residue histidine 253 participates in heme b binding.

The protein belongs to the peroxidase family. Peroxidase/catalase subfamily. As to quaternary structure, homodimer or homotetramer. Heme b is required as a cofactor. Post-translationally, formation of the three residue Trp-Tyr-Met cross-link is important for the catalase, but not the peroxidase activity of the enzyme.

It carries out the reaction H2O2 + AH2 = A + 2 H2O. The enzyme catalyses 2 H2O2 = O2 + 2 H2O. Its function is as follows. Bifunctional enzyme with both catalase and broad-spectrum peroxidase activity. The polypeptide is Catalase-peroxidase (Shewanella baltica (strain OS185)).